A 338-amino-acid chain; its full sequence is MNDEDQKILDAKPIADEIDSELTLRPKYLREYIGQKEIKDQLSVYLKAAKQRDEALDHVLLFGPPGLGKTTLAIVIANEMGAKIKTTSGPAIEKTGDLVALLNELTAGDILFIDEIHRLPKSVEEVLYSAMEDFYVDIVVGQGETAHAIHFPLPPFTLIGATTRAGMLSAPLRDRFGIVAHMQFYPVSDLKLIAKRTAEIFDTSIAGSGAAELALRSRGTPRIVNRLLKRVRDFAQVAGKDTIDEQIVDNALNKLHVDARGLDETDLKYLNTLIHQYKGGPAGVNALASNIGEDSETVEEMVEPYLLQIGFIQRTPRGRQATQAAYEHLQIPYQTGLS.

Residues 4 to 185 are large ATPase domain (RuvB-L); the sequence is EDQKILDAKP…FGIVAHMQFY (182 aa). Residues Leu-24, Arg-25, Gly-66, Lys-69, Thr-70, Thr-71, 132–134, Arg-175, Tyr-185, and Arg-222 contribute to the ATP site; that span reads EDF. Thr-70 contributes to the Mg(2+) binding site. Residues 186 to 256 form a small ATPAse domain (RuvB-S) region; sequence PVSDLKLIAK…IVDNALNKLH (71 aa). The head domain (RuvB-H) stretch occupies residues 259–338; sequence ARGLDETDLK…LQIPYQTGLS (80 aa). Positions 314 and 319 each coordinate DNA.

It belongs to the RuvB family. As to quaternary structure, homohexamer. Forms an RuvA(8)-RuvB(12)-Holliday junction (HJ) complex. HJ DNA is sandwiched between 2 RuvA tetramers; dsDNA enters through RuvA and exits via RuvB. An RuvB hexamer assembles on each DNA strand where it exits the tetramer. Each RuvB hexamer is contacted by two RuvA subunits (via domain III) on 2 adjacent RuvB subunits; this complex drives branch migration. In the full resolvosome a probable DNA-RuvA(4)-RuvB(12)-RuvC(2) complex forms which resolves the HJ.

It localises to the cytoplasm. It carries out the reaction ATP + H2O = ADP + phosphate + H(+). In terms of biological role, the RuvA-RuvB-RuvC complex processes Holliday junction (HJ) DNA during genetic recombination and DNA repair, while the RuvA-RuvB complex plays an important role in the rescue of blocked DNA replication forks via replication fork reversal (RFR). RuvA specifically binds to HJ cruciform DNA, conferring on it an open structure. The RuvB hexamer acts as an ATP-dependent pump, pulling dsDNA into and through the RuvAB complex. RuvB forms 2 homohexamers on either side of HJ DNA bound by 1 or 2 RuvA tetramers; 4 subunits per hexamer contact DNA at a time. Coordinated motions by a converter formed by DNA-disengaged RuvB subunits stimulates ATP hydrolysis and nucleotide exchange. Immobilization of the converter enables RuvB to convert the ATP-contained energy into a lever motion, pulling 2 nucleotides of DNA out of the RuvA tetramer per ATP hydrolyzed, thus driving DNA branch migration. The RuvB motors rotate together with the DNA substrate, which together with the progressing nucleotide cycle form the mechanistic basis for DNA recombination by continuous HJ branch migration. Branch migration allows RuvC to scan DNA until it finds its consensus sequence, where it cleaves and resolves cruciform DNA. The sequence is that of Holliday junction branch migration complex subunit RuvB from Oenococcus oeni (strain ATCC BAA-331 / PSU-1).